The sequence spans 62 residues: uncharacterized protein (62 aa).

The interval 17–62 (YNNYNNNNNNNNNNNNNNNNNNNNNNNNNNNNNNNNNNNNNNKNNN) is disordered.

This is an uncharacterized protein from Dictyostelium discoideum (Social amoeba).